Reading from the N-terminus, the 686-residue chain is MSSRRETRASAQTFIENLKPLQHPNSEKVFLSGSRPDLRVGMRQIHQTDTLHAKTNGETLREQNPPIMVYDCAGAYSDPNADINVHAGLEKFRQSWIEERQDTELLKGVSSQFTQQRLADDGLDHLRFDALVKPRRAKAGRCVTQMHYARRGIITPEMEYIAIRENMAREHVPEGVLTQKSAGESFGACIGEPITAEFVRSEVARGRAIIPLNINHPEAEPMIIGRNFLVKVNANIGNSAVTSSIEEEVEKLVWSTRWGADTVMDLSTGRYIHETREWIIRNSPVPIGTVPIYQALEKVNGVAEDLNWEVFRDTLIEQAEQGVDYFTIHAGVLLRYVPMTAKRLTGIVSRGGSIMAKWCLSHHKESFLYEHFREICELCAAYDVSLSLGDGMRPGCIADANDEAQFAELETLGELVKIAWEYDVQTIIEGPGHVPMHLIKVNMEKQLEHCDEAPFYTLGPQTTDIAPGYDHFTSGIGAAQMAWYGCAMLCYVTPKEHLGLPNKEDVKQGLIAYKIAAHAADIAKGHPGAQVRDNALSKARFEFRWEDQYNLGLDPDTARAYHDESLPQESAKVAHFCSMCGPKFCSMKITQEVREYAADQEAKALLAQAPLAQANIQDVELISPDEYKARQATEADLAKAMAQKSAEFKSQGSALYHSIDSSGINDNKNDQQDASVVRVPSLEIEG.

Substrate is bound by residues asparagine 235, methionine 264, tyrosine 293, histidine 329, serine 349–glycine 351, aspartate 390–arginine 393, and glutamate 429. Position 433 (histidine 433) interacts with Zn(2+). Position 456 (tyrosine 456) interacts with substrate. Histidine 497 contributes to the Zn(2+) binding site. [4Fe-4S] cluster is bound by residues cysteine 577, cysteine 580, and cysteine 585. Residues isoleucine 659–glycine 686 form a disordered region.

It belongs to the ThiC family. Homodimer. The cofactor is [4Fe-4S] cluster.

The enzyme catalyses 5-amino-1-(5-phospho-beta-D-ribosyl)imidazole + S-adenosyl-L-methionine = 4-amino-2-methyl-5-(phosphooxymethyl)pyrimidine + CO + 5'-deoxyadenosine + formate + L-methionine + 3 H(+). It participates in cofactor biosynthesis; thiamine diphosphate biosynthesis. In terms of biological role, catalyzes the synthesis of the hydroxymethylpyrimidine phosphate (HMP-P) moiety of thiamine from aminoimidazole ribotide (AIR) in a radical S-adenosyl-L-methionine (SAM)-dependent reaction. In Shewanella denitrificans (strain OS217 / ATCC BAA-1090 / DSM 15013), this protein is Phosphomethylpyrimidine synthase.